Consider the following 159-residue polypeptide: NADH-quinone oxidoreductase subunit B (159 aa).

4 residues coordinate [4Fe-4S] cluster: C32, C33, C97, and C126.

Belongs to the complex I 20 kDa subunit family. In terms of assembly, NDH-1 is composed of 14 different subunits. Subunits NuoB, C, D, E, F, and G constitute the peripheral sector of the complex. [4Fe-4S] cluster serves as cofactor.

It is found in the cell inner membrane. It carries out the reaction a quinone + NADH + 5 H(+)(in) = a quinol + NAD(+) + 4 H(+)(out). Its function is as follows. NDH-1 shuttles electrons from NADH, via FMN and iron-sulfur (Fe-S) centers, to quinones in the respiratory chain. The immediate electron acceptor for the enzyme in this species is believed to be ubiquinone. Couples the redox reaction to proton translocation (for every two electrons transferred, four hydrogen ions are translocated across the cytoplasmic membrane), and thus conserves the redox energy in a proton gradient. This Helicobacter pylori (strain P12) protein is NADH-quinone oxidoreductase subunit B.